Here is a 198-residue protein sequence, read N- to C-terminus: Nucleoid occlusion factor SlmA (198 aa).

The 62-residue stretch at R9 to L70 folds into the HTH tetR-type domain. Positions T33–F52 form a DNA-binding region, H-T-H motif. Residues D119–K144 are a coiled coil.

Belongs to the nucleoid occlusion factor SlmA family. Homodimer. Interacts with FtsZ.

The protein resides in the cytoplasm. It localises to the nucleoid. Functionally, required for nucleoid occlusion (NO) phenomenon, which prevents Z-ring formation and cell division over the nucleoid. Acts as a DNA-associated cell division inhibitor that binds simultaneously chromosomal DNA and FtsZ, and disrupts the assembly of FtsZ polymers. SlmA-DNA-binding sequences (SBS) are dispersed on non-Ter regions of the chromosome, preventing FtsZ polymerization at these regions. This is Nucleoid occlusion factor SlmA from Sodalis glossinidius (strain morsitans).